A 156-amino-acid polypeptide reads, in one-letter code: Small ribosomal subunit protein uS7 (156 aa).

This sequence belongs to the universal ribosomal protein uS7 family. As to quaternary structure, part of the 30S ribosomal subunit. Contacts proteins S9 and S11.

One of the primary rRNA binding proteins, it binds directly to 16S rRNA where it nucleates assembly of the head domain of the 30S subunit. Is located at the subunit interface close to the decoding center, probably blocks exit of the E-site tRNA. The protein is Small ribosomal subunit protein uS7 of Nitrosospira multiformis (strain ATCC 25196 / NCIMB 11849 / C 71).